A 542-amino-acid chain; its full sequence is Delta 8-(E)-sphingolipid desaturase (542 aa).

A Cytochrome b5 heme-binding domain is found at Met1 to Lys75. Residues His35 and His58 each contribute to the heme site. 2 helical membrane passes run Trp215 to His235 and Ile248 to Trp268. A Histidine box-1 motif is present at residues His235 to His239. Positions His272–His276 match the Histidine box-2 motif. The next 3 membrane-spanning stretches (helical) occupy residues Leu329–Trp346, Ala360–Tyr380, and Phe393–Ser413. The short motif at Gln455–His459 is the Histidine box-3 element.

The protein belongs to the fatty acid desaturase type 1 family.

Its subcellular location is the membrane. It carries out the reaction an N-acylsphing-4-enine + 2 Fe(II)-[cytochrome b5] + O2 + 2 H(+) = a (4E,8E)-4-sphinga-4,8-dienine ceramide + 2 Fe(III)-[cytochrome b5] + 2 H2O. It participates in lipid metabolism; sphingolipid metabolism. In terms of biological role, delta(8)-fatty-acid desaturase which introduces a double bond at the 8-position in the long-chain base (LCB) of ceramides. Required for the formation of the di-unsaturated sphingoid base (E,E)-sphinga-4,8-dienine during glucosylceramide (GluCer) biosynthesis. The protein is Delta 8-(E)-sphingolipid desaturase of Komagataella phaffii (strain GS115 / ATCC 20864) (Yeast).